The chain runs to 630 residues: MLKSLKSRRLILKRLVTLLLSLFFSYLIFSASRNVTSSNKLNNHASERTAVESSAFNWIEKRQHQVRSENLMNRLSAYFLPFLSRSSHKERVLLRQLGNNEIAKSDKCRYIFEVLYKIDPDWDNAQTAKFYNVDGVDNTLASLLGERLRSYDYCFLSGQLDPTAIFANSTVNPHDLQNRMFPFLKKINEESKTVMWPIITDMTTGEAVPAPEVDMESSNFNGNFWSNWNRLSKGRGFVLTIAEKDVPLFLKQLKVMEFSKNELPFQIVSTGNELSAESIAKISETAKETEQRVYLVDCSTVLDTNFANTYISFFQNKWVATLFNTFEEYILLDADVVPFVGSDYFFDSPSYRESGILLFKDRVMENEQTFQYCIEMLNEVEPSAQERRFIGSRLVFDSSLPFSSETSEEASVYYNFFKKLRLHHVDSGLVVVNKLEKLNGLLMSFMLNLDGKLQRCVYGDKEIFWLGQLYAGQDYSINPVDGSIIGPVNEEPENDDGHKSGMYYICSTQIAHSDSKNRLLWVNGGLKTCKISNSAEDDFGREPEYFKSRYGDISKLKRIYDASLNVEGLIVPDVSVHPWMQIKECSNYMYCAYATGDGHTNSELDEGRLITFTEKELRYINDISRTWNAN.

Residues 1–14 (MLKSLKSRRLILKR) are Cytoplasmic-facing. Residues 15–31 (LVTLLLSLFFSYLIFSA) traverse the membrane as a helical; Signal-anchor for type II membrane protein segment. Residues 32 to 630 (SRNVTSSNKL…NDISRTWNAN (599 aa)) are Lumenal-facing. 2 N-linked (GlcNAc...) asparagine glycosylation sites follow: Asn-34 and Asn-168.

This sequence belongs to the MNN1/MNT family.

The protein resides in the golgi apparatus membrane. It participates in protein modification; protein glycosylation. In terms of biological role, mannosyltransferase involved in adding the 4th and 5th mannose residues of O-linked glycans. The polypeptide is Alpha-1,3-mannosyltransferase MNT3 (MNT3) (Saccharomyces cerevisiae (strain ATCC 204508 / S288c) (Baker's yeast)).